Here is a 194-residue protein sequence, read N- to C-terminus: Cysteine and glycine-rich protein 3 (194 aa).

The interaction with TCAP stretch occupies residues Met1–Gly5. Positions Cys10–Cys61 constitute an LIM zinc-binding 1 domain. The Nuclear localization signal motif lies at Arg64–Lys69. An interaction with CLF2 region spans residues Gln94 to Ser106. Ser95 and Ser153 each carry phosphoserine. The LIM zinc-binding 2 domain maps to Cys120–Cys171.

As to quaternary structure, self-associates. Oligomeric in the cytoplasm and monomeric in the nucleus. Homooligomers preferentially form along the actin cytoskeleton. Interacts with TCAP, LDHD, MYOD1, MYOG, ACTN2, NRAP, MYF6. Interacts (via N-terminus) with GLRX3 (via C-terminus) and PPP3CA; GLRX3 and calcineurin compete for interaction with CSRP3. Interacts with CFL2; the stoichiometry influences F-actin depolymerization and possibly two molecules of CFL2 can interact with one molecule of CSRP3 resulting in the highest functional impact; the interaction is stronger with phosphorylated CFL2.

It localises to the nucleus. It is found in the cytoplasm. The protein localises to the cytoskeleton. The protein resides in the myofibril. Its subcellular location is the sarcomere. It localises to the z line. In terms of biological role, positive regulator of myogenesis. Acts as a cofactor for myogenic bHLH transcription factors such as MYOD1, and probably MYOG and MYF6. Enhances the DNA-binding activity of the MYOD1:TCF3 isoform E47 complex and may promote formation of a functional MYOD1:TCF3 isoform E47:MEF2A complex involved in myogenesis. Plays a crucial and specific role in the organization of cytosolic structures in cardiomyocytes. Could play a role in mechanical stretch sensing. May be a scaffold protein that promotes the assembly of interacting proteins at Z-line structures. It is essential for calcineurin anchorage to the Z line. Required for stress-induced calcineurin-NFAT activation. The role in regulation of cytoskeleton dynamics by association with CFL2 is reported conflictingly. Proposed to contribute to the maintenance of muscle cell integrity through an actin-based mechanism. Can directly bind to actin filaments, cross-link actin filaments into bundles without polarity selectivity and protect them from dilution- and cofilin-mediated depolymerization; the function seems to involve its self-association. In vitro can inhibit PKC/PRKCA activity. Proposed to be involved in cardiac stress signaling by down-regulating excessive PKC/PRKCA signaling. The sequence is that of Cysteine and glycine-rich protein 3 (CSRP3) from Bos taurus (Bovine).